The primary structure comprises 253 residues: BRI3-binding protein (253 aa).

The next 4 helical transmembrane spans lie at 19-39, 131-151, 164-181, and 190-210; these read VLLP…PGAQ, ALVL…TLGF, FWLV…YILH, and AVLP…MGYW. A coiled-coil region spans residues 219–253; the sequence is SPSVEEKLEHLENQVRLLNIRLNRVLENLDRSKDK. At Ser250 the chain carries Phosphoserine.

In terms of assembly, interacts with LETMD1. Interacts with BRI3. Interacts with BRI3; the interaction is weak. Interacts with TMEM238L.

It is found in the mitochondrion outer membrane. In terms of biological role, involved in tumorigenesis and may function by stabilizing p53/TP53. This chain is BRI3-binding protein, found in Mus musculus (Mouse).